Consider the following 378-residue polypeptide: tRNA-specific 2-thiouridylase MnmA (378 aa).

ATP contacts are provided by residues 6–13 (AMSGGVDS) and leucine 32. The active-site Nucleophile is cysteine 101. The cysteines at positions 101 and 199 are disulfide-linked. Glycine 125 is an ATP binding site. The interval 148–150 (KDQ) is interaction with tRNA. The Cysteine persulfide intermediate role is filled by cysteine 199.

It belongs to the MnmA/TRMU family.

Its subcellular location is the cytoplasm. The catalysed reaction is S-sulfanyl-L-cysteinyl-[protein] + uridine(34) in tRNA + AH2 + ATP = 2-thiouridine(34) in tRNA + L-cysteinyl-[protein] + A + AMP + diphosphate + H(+). Its function is as follows. Catalyzes the 2-thiolation of uridine at the wobble position (U34) of tRNA, leading to the formation of s(2)U34. This chain is tRNA-specific 2-thiouridylase MnmA, found in Renibacterium salmoninarum (strain ATCC 33209 / DSM 20767 / JCM 11484 / NBRC 15589 / NCIMB 2235).